A 316-amino-acid polypeptide reads, in one-letter code: SHC-transforming protein homolog 1 (316 aa).

The 143-residue stretch at 16 to 158 folds into the PID domain; the sequence is GVSLSATYLG…LIDVLTTAIN (143 aa). The SH2 domain occupies 211 to 307; it reads WYHGNLSRED…ETSLNLIRPV (97 aa). The interval 292–316 is disordered; that stretch reads SEGRDRETSLNLIRPVPCPGSDDIE.

In terms of assembly, interacts (via PID domain) with daf-2 (via cytoplasmic domain). Interacts with mek-1; the interaction is independent of mek-1 catalytic activity and is constitutive. Interacts (via N-terminus) with mlk-1 (via NPQY motif when phosphorylated on tyrosine residue). Does not interact with jkk-1 or sek-1. Interacts (via SH2 domain) with svh-2. Interacts with svh-4. In terms of tissue distribution, expressed in hypodermis, intestine, head and tail neurons, pharynx, gonads, vulva and body muscles.

It is found in the cytoplasm. The protein localises to the nucleus. It localises to the cell membrane. Functionally, scaffold protein which plays an important role in the activation of the JNK pathway composed of mlk-1, mek-1 and kgb-1; by bringing together mek-1 and mlk-1, promotes mlk-1-mediated phosphorylation and activation of mek-1 which in turn phosphorylates kgb-1. In addition, negatively modulates the activation of the insulin/IGF-1-like signaling (IIS) probably by inhibiting the insulin receptor daf-2. Positively regulates the activity of the transcription factor daf-16/FOXO by both inhibiting IIS and activating the JNK pathway. Plays a role in maintaining gonadal basement membrane integrity through activation of the JNK pathway components mek-1 and jnk-1. Involved in the response to several environmental stresses including heavy metal ions (Cu(2+) and Cd(2+)), heat, oxidative and protein misfolding (ER) stresses. Plays a role in gonad and germline development following the L1 diapause. Plays a role in life span and egg laying. Plays a role in axon regeneration after injury. In Caenorhabditis elegans, this protein is SHC-transforming protein homolog 1.